The primary structure comprises 481 residues: ATP synthase subunit beta, chloroplastic (481 aa).

G163–T170 serves as a coordination point for ATP.

It belongs to the ATPase alpha/beta chains family. In terms of assembly, F-type ATPases have 2 components, CF(1) - the catalytic core - and CF(0) - the membrane proton channel. CF(1) has five subunits: alpha(3), beta(3), gamma(1), delta(1), epsilon(1). CF(0) has four main subunits: a(1), b(1), b'(1) and c(9-12).

The protein resides in the plastid. It is found in the chloroplast thylakoid membrane. It carries out the reaction ATP + H2O + 4 H(+)(in) = ADP + phosphate + 5 H(+)(out). Functionally, produces ATP from ADP in the presence of a proton gradient across the membrane. The catalytic sites are hosted primarily by the beta subunits. This Tupiella akineta (Green alga) protein is ATP synthase subunit beta, chloroplastic.